The primary structure comprises 103 residues: Large ribosomal subunit protein bL21 (103 aa).

The protein belongs to the bacterial ribosomal protein bL21 family. In terms of assembly, part of the 50S ribosomal subunit. Contacts protein L20.

In terms of biological role, this protein binds to 23S rRNA in the presence of protein L20. This is Large ribosomal subunit protein bL21 from Pasteurella multocida (strain Pm70).